The chain runs to 249 residues: tRNA pseudouridine synthase A (249 aa).

Asp53 serves as the catalytic Nucleophile. Substrate is bound at residue Tyr111.

Belongs to the tRNA pseudouridine synthase TruA family. In terms of assembly, homodimer.

It catalyses the reaction uridine(38/39/40) in tRNA = pseudouridine(38/39/40) in tRNA. Formation of pseudouridine at positions 38, 39 and 40 in the anticodon stem and loop of transfer RNAs. The sequence is that of tRNA pseudouridine synthase A from Streptococcus pneumoniae (strain P1031).